The sequence spans 298 residues: MTYRECVLEVARDDAEALSEALFDLGALSVSVEDADADTPDEEPLFGEPGHEPTRLAWNRSRVVALLGDDADPALLVAAAANAIGLSAAPAYTVREVEEQDWVRLTQSQFEPIHIGEHIWVVPSWHDAPQPEAVVLELDPGLAFGTGSHPTTRLCMEWLEQHVQPGERTLDYGCGSGILAIVAKKLGTGETVGVDIDPNAVEASRYNAERNRVEAGFSLPGDAPEGTFDLVVANILSNPLKLMASMLCARVRPGGRLVLSGVLERQAEDVAAAYADAIPLSVWRARDGWVCLHGVKPA.

Positions 152, 173, 195, and 234 each coordinate S-adenosyl-L-methionine.

It belongs to the methyltransferase superfamily. PrmA family.

It localises to the cytoplasm. The enzyme catalyses L-lysyl-[protein] + 3 S-adenosyl-L-methionine = N(6),N(6),N(6)-trimethyl-L-lysyl-[protein] + 3 S-adenosyl-L-homocysteine + 3 H(+). Methylates ribosomal protein L11. This Ralstonia nicotianae (strain ATCC BAA-1114 / GMI1000) (Ralstonia solanacearum) protein is Ribosomal protein L11 methyltransferase.